A 201-amino-acid polypeptide reads, in one-letter code: 3-isopropylmalate dehydratase small subunit (201 aa).

It belongs to the LeuD family. LeuD type 1 subfamily. In terms of assembly, heterodimer of LeuC and LeuD.

It carries out the reaction (2R,3S)-3-isopropylmalate = (2S)-2-isopropylmalate. It functions in the pathway amino-acid biosynthesis; L-leucine biosynthesis; L-leucine from 3-methyl-2-oxobutanoate: step 2/4. Functionally, catalyzes the isomerization between 2-isopropylmalate and 3-isopropylmalate, via the formation of 2-isopropylmaleate. The protein is 3-isopropylmalate dehydratase small subunit of Shewanella sp. (strain MR-4).